The chain runs to 331 residues: MKFTGSPLLWPSWLPLPAPPPPLPSVTRRRDPRTVGKRAAITDACDVGYGAGTTGGSGGTTTTVSTPAQFTAAATSDEKAVIVVKGAITGATKVKVGSNKSIIGRAGSSLTGVGLYINKQENVIVRNMKISKVLADNGDRIGIQASSKVWVDHCDLSSDKKNNGKDYYDGLLDITHASMAVTVSNTYIHDHYKGSLVGHSDSNSAEDTGKLYVTYANNHWYNVASRNPSVRFGNVHIFNNYAEKLETSGVNTRMGAQLLIESSVFSDTKKAVTFLDSKSTGYAVVNDVDLGGSTNDRPQGTFTKPDYSYTLLGSSKVKAAVVGTAGQTLTF.

An N-terminal signal peptide occupies residues 1–25 (MKFTGSPLLWPSWLPLPAPPPPLPS). N-linked (GlcNAc...) asparagine glycosylation is present at Asn-99. Positions 139, 169, and 173 each coordinate Ca(2+). Residue Arg-226 is part of the active site.

This sequence belongs to the polysaccharide lyase 1 family. It depends on Ca(2+) as a cofactor.

The protein localises to the secreted. The catalysed reaction is Eliminative cleavage of (1-&gt;4)-alpha-D-galacturonan to give oligosaccharides with 4-deoxy-alpha-D-galact-4-enuronosyl groups at their non-reducing ends.. Its pathway is glycan metabolism; pectin degradation; 2-dehydro-3-deoxy-D-gluconate from pectin: step 2/5. Functionally, acts as a virulence factor active in plant tissue maceration. The polypeptide is Pectate lyase B (PLB) (Colletotrichum gloeosporioides (Anthracnose fungus)).